Here is a 482-residue protein sequence, read N- to C-terminus: Rhamnulokinase (482 aa).

13-17 is a binding site for ATP; sequence ASSGR. Substrate-binding positions include glycine 83 and 232–234; that span reads HDT. Aspartate 233 (proton acceptor) is an active-site residue. Threonine 255 lines the ATP pocket. Asparagine 292 lines the substrate pocket. Residue asparagine 300 participates in ATP binding. An intrachain disulfide couples cysteine 349 to cysteine 366. ATP is bound at residue glycine 398. Cysteine 409 and cysteine 413 are disulfide-bonded.

It belongs to the rhamnulokinase family. It depends on Mg(2+) as a cofactor.

It catalyses the reaction L-rhamnulose + ATP = L-rhamnulose 1-phosphate + ADP + H(+). Its pathway is carbohydrate degradation; L-rhamnose degradation; glycerone phosphate from L-rhamnose: step 2/3. Involved in the catabolism of L-rhamnose (6-deoxy-L-mannose). Catalyzes the transfer of the gamma-phosphate group from ATP to the 1-hydroxyl group of L-rhamnulose to yield L-rhamnulose 1-phosphate. In Mannheimia succiniciproducens (strain KCTC 0769BP / MBEL55E), this protein is Rhamnulokinase.